The primary structure comprises 144 residues: Nucleoside diphosphate kinase (144 aa).

ATP contacts are provided by lysine 9, phenylalanine 57, arginine 85, threonine 91, arginine 102, and asparagine 112. Catalysis depends on histidine 120, which acts as the Pros-phosphohistidine intermediate.

This sequence belongs to the NDK family. As to quaternary structure, homotetramer. It depends on Mg(2+) as a cofactor.

It localises to the cytoplasm. It carries out the reaction a 2'-deoxyribonucleoside 5'-diphosphate + ATP = a 2'-deoxyribonucleoside 5'-triphosphate + ADP. The enzyme catalyses a ribonucleoside 5'-diphosphate + ATP = a ribonucleoside 5'-triphosphate + ADP. Major role in the synthesis of nucleoside triphosphates other than ATP. The ATP gamma phosphate is transferred to the NDP beta phosphate via a ping-pong mechanism, using a phosphorylated active-site intermediate. The protein is Nucleoside diphosphate kinase of Streptococcus uberis (strain ATCC BAA-854 / 0140J).